Here is a 374-residue protein sequence, read N- to C-terminus: Cyclin-dependent kinase 9 (374 aa).

The 300-residue stretch at 19 to 318 (YEKLAKIGQG…SDDALNHDFF (300 aa)) folds into the Protein kinase domain. ATP contacts are provided by residues 25 to 33 (IGQGTFGEV) and Lys-48. Residue Asp-151 is the Proton acceptor of the active site. The segment at 345–374 (PRRRGHMPQQPANQNRNPATTSQSEFDRVF) is disordered. Residues 354–368 (QPANQNRNPATTSQS) are compositionally biased toward polar residues.

This sequence belongs to the protein kinase superfamily. CMGC Ser/Thr protein kinase family. CDC2/CDKX subfamily. Component of the super elongation complex (SEC). Associates with ccnt1/cyclin-T1, ccnt2/cyclin-T2 or ccnk/cyclin-K to form active P-TEFb.

It is found in the nucleus. The protein resides in the cytoplasm. It localises to the PML body. The enzyme catalyses L-seryl-[protein] + ATP = O-phospho-L-seryl-[protein] + ADP + H(+). It catalyses the reaction L-threonyl-[protein] + ATP = O-phospho-L-threonyl-[protein] + ADP + H(+). The catalysed reaction is [DNA-directed RNA polymerase] + ATP = phospho-[DNA-directed RNA polymerase] + ADP + H(+). Protein kinase involved in the regulation of transcription. Member of the cyclin-dependent kinase pair (CDK9/cyclin-T) complex, also called positive transcription elongation factor b (P-TEFb), which facilitates the transition from abortive to productive elongation by phosphorylating the CTD (C-terminal domain) of the large subunit of RNA polymerase II (RNAP II) polr2a, supt5h and rdbp. This complex is inactive when in the 7SK snRNP complex form. Regulates cytokine inducible transcription networks by facilitating promoter recognition of target transcription factors. P-TEFb is also involved in cotranscriptional histone modification, mRNA processing and mRNA export. In Danio rerio (Zebrafish), this protein is Cyclin-dependent kinase 9.